The primary structure comprises 243 residues: Vesicle-associated membrane protein-associated protein B/C (243 aa).

At A2 the chain carries N-acetylalanine. The Cytoplasmic segment spans residues 2–222; sequence AKVEQVLSLE…PTGKEEGLST (221 aa). Positions 7-124 constitute an MSP domain; it reads VLSLEPQHEL…MDSKLRCVFE (118 aa). S146 carries the post-translational modification Phosphoserine. Residue K147 forms a Glycyl lysine isopeptide (Lys-Gly) (interchain with G-Cter in SUMO1) linkage. A Phosphothreonine modification is found at T150. Residues S156, S158, S159, S160, and S206 each carry the phosphoserine modification. Positions 159-196 form a coiled coil; the sequence is SSLDDTEVKKVMEECKRLQGEVQRLREENKQFKEEDGL. A helical; Anchor for type IV membrane protein membrane pass occupies residues 223–243; sequence RLLALVVLFFIVGVIIGKIAL.

It belongs to the VAMP-associated protein (VAP) (TC 9.B.17) family. In terms of assembly, homodimer, and heterodimer with VAPA. Interacts with VAMP1 and VAMP2. Interacts (via MSP domain) with ZFYVE27. Interacts with RMDN3. Interacts with KIF5A in a ZFYVE27-dependent manner. Interacts (via MSP domain) with STARD3 (via phospho-FFAT motif). Interacts with STARD3NL (via FFAT motif). Interacts with CERT1. Interacts with PLEKHA3 and SACM1L to form a ternary complex. Interacts with VPS13A (via FFAT motif). Interacts with RB1CC1 (via phosphorylated FFAT motif), MIGA2 (via phosphorylated FFAT motif), RMDN3 (via phosphorylated FFAT motif), OSBPL1A (via FFAT motif), KCNB1 (via phosphorylated FFAT motif) and KCNB2 (via phosphorylated FFAT motif). Interacts (via MSP domain) with WDR44 (via FFAT motif); the interactions connect the endoplasmic reticulum (ER) with the endosomal tubule. As to quaternary structure, (Microbial infection) Interacts (via MSP domain) with hepatitis C virus (HCV) non-structural protein 5A (via disordered domain D3). Interacts with HCV RNA-directed RNA polymerase. Ubiquitous. Isoform 1 predominates.

Its subcellular location is the endoplasmic reticulum membrane. Its function is as follows. Endoplasmic reticulum (ER)-anchored protein that mediates the formation of contact sites between the ER and endosomes via interaction with FFAT motif-containing proteins such as STARD3 or WDR44. Interacts with STARD3 in a FFAT motif phosphorylation dependent manner. Via interaction with WDR44 participates in neosynthesized protein export. Participates in the endoplasmic reticulum unfolded protein response (UPR) by inducing ERN1/IRE1 activity. Involved in cellular calcium homeostasis regulation. This chain is Vesicle-associated membrane protein-associated protein B/C, found in Homo sapiens (Human).